The following is a 256-amino-acid chain: Hydroxyacylglutathione hydrolase (256 aa).

Positions 57, 59, 61, 62, 115, 134, and 172 each coordinate Zn(2+).

The protein belongs to the metallo-beta-lactamase superfamily. Glyoxalase II family. In terms of assembly, monomer. It depends on Zn(2+) as a cofactor.

It carries out the reaction an S-(2-hydroxyacyl)glutathione + H2O = a 2-hydroxy carboxylate + glutathione + H(+). The protein operates within secondary metabolite metabolism; methylglyoxal degradation; (R)-lactate from methylglyoxal: step 2/2. Its function is as follows. Thiolesterase that catalyzes the hydrolysis of S-D-lactoyl-glutathione to form glutathione and D-lactic acid. This Jannaschia sp. (strain CCS1) protein is Hydroxyacylglutathione hydrolase.